Consider the following 220-residue polypeptide: Deoxyribose-phosphate aldolase (220 aa).

Asp89 functions as the Proton donor/acceptor in the catalytic mechanism. Lys151 serves as the catalytic Schiff-base intermediate with acetaldehyde. Lys180 acts as the Proton donor/acceptor in catalysis.

The protein belongs to the DeoC/FbaB aldolase family. DeoC type 1 subfamily.

Its subcellular location is the cytoplasm. It carries out the reaction 2-deoxy-D-ribose 5-phosphate = D-glyceraldehyde 3-phosphate + acetaldehyde. It functions in the pathway carbohydrate degradation; 2-deoxy-D-ribose 1-phosphate degradation; D-glyceraldehyde 3-phosphate and acetaldehyde from 2-deoxy-alpha-D-ribose 1-phosphate: step 2/2. Functionally, catalyzes a reversible aldol reaction between acetaldehyde and D-glyceraldehyde 3-phosphate to generate 2-deoxy-D-ribose 5-phosphate. The polypeptide is Deoxyribose-phosphate aldolase (Deinococcus radiodurans (strain ATCC 13939 / DSM 20539 / JCM 16871 / CCUG 27074 / LMG 4051 / NBRC 15346 / NCIMB 9279 / VKM B-1422 / R1)).